The chain runs to 367 residues: MQPESSQREETPSLLWGLDPVFLAFAKLYIGDILDLKESRQVPGVFFYNGHPIKQVEILGTVIGRREKDAFYSYGVDDGTGVINCICWKKSNNAAPSSAAPALGVLNLTSQLKKLQETIEQKTKIEIGDIVQIRGYVHTYREEREIRVTTYYKVDDPVCNIQIARMLELPSIYRKVYDQPFCSPALEQERAFSDPSALDLASLTRLLSERAKEFLAENKVQTFYQQELEIVESLLSLANQPVIHGAGPEQGDSKSDTTSKAIHSIFKNAIQLLQEKGFVFQKDDGFDKLYYVTREDKELHRKIHHIIQEDCQKPNHAEKGCHFQHILACARLSVSPDLSEGVLQQVLELLEDQSDIISTTEHYYTAF.

The OB DNA-binding region spans 56–154 (VEILGTVIGR…EIRVTTYYKV (99 aa)). Winged helix-turn-helix (wHTH) regions lie at residues 190–294 (RAFS…YVTR) and 295–367 (EDKE…YTAF).

It belongs to the STN1 family. As to quaternary structure, component of the CST complex, composed of TEN1, CTC1 and STN1. Interacts with TEN1 and CTC1; the interaction is direct. Interacts with ACD/TPP1.

The protein localises to the nucleus. It is found in the chromosome. The protein resides in the telomere. Its function is as follows. Component of the CST complex, a complex that binds to single-stranded DNA and is required to protect telomeres from DNA degradation. The CST complex binds single-stranded DNA with high affinity in a sequence-independent manner, while isolated subunits bind DNA with low affinity by themselves. In addition to telomere protection, the CST complex has probably a more general role in DNA metabolism at non-telomeric sites. This Ailuropoda melanoleuca (Giant panda) protein is CST complex subunit STN1.